The sequence spans 320 residues: Cytochrome f (320 aa).

The first 32 residues, 1–32 (MKTKKSYDKVTRWVTPPILMLIIIHIITGACS), serve as a signal peptide directing secretion. Heme contacts are provided by Tyr-36, Cys-56, Cys-59, and His-60. Residues 286 to 306 (IQGLLGFLASVVLAQIFLVLK) traverse the membrane as a helical segment.

The protein belongs to the cytochrome f family. The 4 large subunits of the cytochrome b6-f complex are cytochrome b6, subunit IV (17 kDa polypeptide, petD), cytochrome f and the Rieske protein, while the 4 small subunits are PetG, PetL, PetM and PetN. The complex functions as a dimer. It depends on heme as a cofactor.

Its subcellular location is the plastid. The protein localises to the chloroplast thylakoid membrane. Component of the cytochrome b6-f complex, which mediates electron transfer between photosystem II (PSII) and photosystem I (PSI), cyclic electron flow around PSI, and state transitions. This Gnetum parvifolium (Small-leaved jointfir) protein is Cytochrome f.